Consider the following 333-residue polypeptide: Ribonucleoside-diphosphate reductase small chain B (333 aa).

The Fe cation site is built by Asp76, Glu107, and His110. Tyr114 is an active-site residue. Fe cation contacts are provided by Glu169, Glu203, and His206.

The protein belongs to the ribonucleoside diphosphate reductase small chain family. Heterodimer of a large and a small chain. Fe cation is required as a cofactor. As to expression, expressed in roots, rosette leaves, stems and flowers.

The protein localises to the cytoplasm. The catalysed reaction is a 2'-deoxyribonucleoside 5'-diphosphate + [thioredoxin]-disulfide + H2O = a ribonucleoside 5'-diphosphate + [thioredoxin]-dithiol. Its function is as follows. Provides the precursors necessary for DNA synthesis. Catalyzes the biosynthesis of deoxyribonucleotides from the corresponding ribonucleotides. The chain is Ribonucleoside-diphosphate reductase small chain B (RNR2B) from Arabidopsis thaliana (Mouse-ear cress).